Consider the following 224-residue polypeptide: Metalloproteinase inhibitor 4 (224 aa).

The signal sequence occupies residues 1–29 (MPWSPLAALSWALVLRLLALLWPPGRGEA). Cysteine 30 contacts Zn(2+). Involved in metalloproteinase-binding stretches follow at residues 30 to 33 (CSCA) and 99 to 100 (SS). 6 disulfides stabilise this stretch: cysteine 30–cysteine 102, cysteine 32–cysteine 131, cysteine 42–cysteine 156, cysteine 158–cysteine 205, cysteine 163–cysteine 168, and cysteine 176–cysteine 197. In terms of domain architecture, NTR spans 30–156 (CSCAPAHPQQ…SLNHHYHQNC (127 aa)).

It belongs to the protease inhibitor I35 (TIMP) family. In terms of tissue distribution, expressed in brain, heart, ovary and skeletal muscle.

It localises to the secreted. Functionally, complexes with metalloproteinases (such as collagenases) and irreversibly inactivates them by binding to their catalytic zinc cofactor. In Mus musculus (Mouse), this protein is Metalloproteinase inhibitor 4 (Timp4).